The following is a 486-amino-acid chain: Probable cytosol aminopeptidase (486 aa).

Mn(2+)-binding residues include Lys256 and Asp261. Lys268 is an active-site residue. Mn(2+) contacts are provided by Asp280, Asp339, and Glu341. The active site involves Arg343.

Belongs to the peptidase M17 family. Mn(2+) serves as cofactor.

The protein resides in the cytoplasm. The enzyme catalyses Release of an N-terminal amino acid, Xaa-|-Yaa-, in which Xaa is preferably Leu, but may be other amino acids including Pro although not Arg or Lys, and Yaa may be Pro. Amino acid amides and methyl esters are also readily hydrolyzed, but rates on arylamides are exceedingly low.. It catalyses the reaction Release of an N-terminal amino acid, preferentially leucine, but not glutamic or aspartic acids.. Functionally, presumably involved in the processing and regular turnover of intracellular proteins. Catalyzes the removal of unsubstituted N-terminal amino acids from various peptides. The chain is Probable cytosol aminopeptidase from Synechococcus sp. (strain ATCC 27144 / PCC 6301 / SAUG 1402/1) (Anacystis nidulans).